The chain runs to 720 residues: Fatty acid CoA ligase Acsl3 (720 aa).

Residues 21–41 traverse the membrane as a helical; Signal-anchor for type III membrane protein segment; it reads ILLYFIHFIISLYTILTYIPF. Topologically, residues 42 to 720 are cytoplasmic; sequence YFLCESKQEK…ADIERMYGRK (679 aa). At Ser683 the chain carries Phosphoserine.

This sequence belongs to the ATP-dependent AMP-binding enzyme family. The cofactor is Mg(2+). In terms of tissue distribution, predominantly expressed in the brain, and to a much lesser extent, in lung, adrenal gland, kidney, small intestine, and adipose tissue but not detected in heart or liver.

Its subcellular location is the mitochondrion outer membrane. The protein localises to the peroxisome membrane. It localises to the microsome membrane. It is found in the endoplasmic reticulum membrane. It catalyses the reaction a long-chain fatty acid + ATP + CoA = a long-chain fatty acyl-CoA + AMP + diphosphate. The enzyme catalyses (5Z,8Z,11Z,14Z)-eicosatetraenoate + ATP + CoA = (5Z,8Z,11Z,14Z)-eicosatetraenoyl-CoA + AMP + diphosphate. The catalysed reaction is a medium-chain fatty acid + ATP + CoA = a medium-chain fatty acyl-CoA + AMP + diphosphate. It carries out the reaction 15-hydroxy-(5Z,8Z,11Z,13E)-eicosatetraenoate + ATP + CoA = 15-hydroxy-(5Z,8Z,11Z,13E)-eicosatetraenoyl-CoA + AMP + diphosphate. It catalyses the reaction 12-hydroxy-(5Z,8Z,10E,14Z)-eicosatetraenoate + ATP + CoA = 12-hydroxy-(5Z,8Z,10E,14Z)-eicosatetraenoyl-CoA + AMP + diphosphate. The enzyme catalyses 5-hydroxy-(6E,8Z,11Z,14Z)-eicosatetraenoate + ATP + CoA = 5-hydroxy-(6E,8Z,11Z,14Z)-eicosatetraenoyl-CoA + AMP + diphosphate. The catalysed reaction is 14,15-epoxy-(5Z,8Z,11Z)-eicosatrienoate + ATP + CoA = 14,15-epoxy-(5Z,8Z,11Z)-eicosatrienoyl-CoA + AMP + diphosphate. It carries out the reaction 11,12-epoxy-(5Z,8Z,14Z)-eicosatrienoate + ATP + CoA = 11,12-epoxy-(5Z,8Z,14Z)-eicosatrienoyl-CoA + AMP + diphosphate. It catalyses the reaction (E)-hexadec-2-enoate + ATP + CoA = (2E)-hexadecenoyl-CoA + AMP + diphosphate. The enzyme catalyses hexadecanoate + ATP + CoA = hexadecanoyl-CoA + AMP + diphosphate. The catalysed reaction is tetradecanoate + ATP + CoA = tetradecanoyl-CoA + AMP + diphosphate. It carries out the reaction dodecanoate + ATP + CoA = dodecanoyl-CoA + AMP + diphosphate. It catalyses the reaction octadecanoate + ATP + CoA = octadecanoyl-CoA + AMP + diphosphate. The enzyme catalyses eicosanoate + ATP + CoA = eicosanoyl-CoA + AMP + diphosphate. The catalysed reaction is (9Z)-octadecenoate + ATP + CoA = (9Z)-octadecenoyl-CoA + AMP + diphosphate. It carries out the reaction (9Z)-hexadecenoate + ATP + CoA = (9Z)-hexadecenoyl-CoA + AMP + diphosphate. It catalyses the reaction (9Z,12Z)-octadecadienoate + ATP + CoA = (9Z,12Z)-octadecadienoyl-CoA + AMP + diphosphate. The enzyme catalyses (9Z,12Z,15Z)-octadecatrienoate + ATP + CoA = (9Z,12Z,15Z)-octadecatrienoyl-CoA + AMP + diphosphate. The catalysed reaction is (4Z,7Z,10Z,13Z,16Z,19Z)-docosahexaenoate + ATP + CoA = (4Z,7Z,10Z,13Z,16Z,19Z)-docosahexaenoyl-CoA + AMP + diphosphate. It carries out the reaction (5Z,8Z,11Z,14Z,17Z)-eicosapentaenoate + ATP + CoA = (5Z,8Z,11Z,14Z,17Z)-eicosapentaenoyl-CoA + AMP + diphosphate. It catalyses the reaction a fatty acid + ATP + CoA = a fatty acyl-CoA + AMP + diphosphate. Functionally, catalyzes the conversion of long-chain fatty acids to their active form acyl-CoA for both synthesis of cellular lipids, and degradation via beta-oxidation. ACSL3 is required for the incorporation of fatty acids into phosphatidylcholine, the major phospholipid located on the surface of VLDL (very low density lipoproteins). Has mainly an anabolic role in energy metabolism. Mediates hepatic lipogenesis. Preferentially uses myristate, laurate, arachidonate and eicosapentaenoate as substrates. Both isoforms exhibit the same level of activity. This Rattus norvegicus (Rat) protein is Fatty acid CoA ligase Acsl3.